A 99-amino-acid chain; its full sequence is Aspartyl/glutamyl-tRNA(Asn/Gln) amidotransferase subunit C (99 aa).

Belongs to the GatC family. As to quaternary structure, heterotrimer of A, B and C subunits.

It catalyses the reaction L-glutamyl-tRNA(Gln) + L-glutamine + ATP + H2O = L-glutaminyl-tRNA(Gln) + L-glutamate + ADP + phosphate + H(+). The catalysed reaction is L-aspartyl-tRNA(Asn) + L-glutamine + ATP + H2O = L-asparaginyl-tRNA(Asn) + L-glutamate + ADP + phosphate + 2 H(+). Its function is as follows. Allows the formation of correctly charged Asn-tRNA(Asn) or Gln-tRNA(Gln) through the transamidation of misacylated Asp-tRNA(Asn) or Glu-tRNA(Gln) in organisms which lack either or both of asparaginyl-tRNA or glutaminyl-tRNA synthetases. The reaction takes place in the presence of glutamine and ATP through an activated phospho-Asp-tRNA(Asn) or phospho-Glu-tRNA(Gln). The sequence is that of Aspartyl/glutamyl-tRNA(Asn/Gln) amidotransferase subunit C from Paraburkholderia xenovorans (strain LB400).